Here is a 462-residue protein sequence, read N- to C-terminus: Ribosomal protein uS12 methylthiotransferase RimO (462 aa).

In terms of domain architecture, MTTase N-terminal spans 10–125 (PRIGMVSLGC…VLDAVHRNLP (116 aa)). The [4Fe-4S] cluster site is built by Cys19, Cys55, Cys84, Cys160, Cys164, and Cys167. A Radical SAM core domain is found at 146–388 (LTPRHYAYLK…AVAEALSSAK (243 aa)). A TRAM domain is found at 390-462 (QRRVGATMQV…RGHDLLAQPI (73 aa)).

This sequence belongs to the methylthiotransferase family. RimO subfamily. [4Fe-4S] cluster is required as a cofactor.

The protein resides in the cytoplasm. It catalyses the reaction L-aspartate(89)-[ribosomal protein uS12]-hydrogen + (sulfur carrier)-SH + AH2 + 2 S-adenosyl-L-methionine = 3-methylsulfanyl-L-aspartate(89)-[ribosomal protein uS12]-hydrogen + (sulfur carrier)-H + 5'-deoxyadenosine + L-methionine + A + S-adenosyl-L-homocysteine + 2 H(+). Catalyzes the methylthiolation of an aspartic acid residue of ribosomal protein uS12. This Verminephrobacter eiseniae (strain EF01-2) protein is Ribosomal protein uS12 methylthiotransferase RimO.